Here is a 259-residue protein sequence, read N- to C-terminus: tRNA (guanine-N(7)-)-methyltransferase (259 aa).

Residues 1–74 (MGHHGQMHAQ…PAEDPDRPGP (74 aa)) form a disordered region. S-adenosyl-L-methionine is bound by residues E91, E116, N143, and D166. Residue D166 is part of the active site. Substrate is bound by residues K170, D202, and 238 to 241 (TKYE).

It belongs to the class I-like SAM-binding methyltransferase superfamily. TrmB family.

The enzyme catalyses guanosine(46) in tRNA + S-adenosyl-L-methionine = N(7)-methylguanosine(46) in tRNA + S-adenosyl-L-homocysteine. It functions in the pathway tRNA modification; N(7)-methylguanine-tRNA biosynthesis. Functionally, catalyzes the formation of N(7)-methylguanine at position 46 (m7G46) in tRNA. This Mycobacterium avium (strain 104) protein is tRNA (guanine-N(7)-)-methyltransferase.